A 554-amino-acid polypeptide reads, in one-letter code: Chaperonin GroEL (554 aa).

Residues 30–33 (TLGP), Lys-51, 87–91 (DGTTT), Gly-415, 479–481 (NAA), and Asp-495 contribute to the ATP site.

It belongs to the chaperonin (HSP60) family. Forms a cylinder of 14 subunits composed of two heptameric rings stacked back-to-back. Interacts with the co-chaperonin GroES.

Its subcellular location is the cytoplasm. It carries out the reaction ATP + H2O + a folded polypeptide = ADP + phosphate + an unfolded polypeptide.. Functionally, together with its co-chaperonin GroES, plays an essential role in assisting protein folding. The GroEL-GroES system forms a nano-cage that allows encapsulation of the non-native substrate proteins and provides a physical environment optimized to promote and accelerate protein folding. The chain is Chaperonin GroEL from Nitrosococcus oceani (strain ATCC 19707 / BCRC 17464 / JCM 30415 / NCIMB 11848 / C-107).